A 379-amino-acid chain; its full sequence is Probable protein phosphatase 2C 46 (379 aa).

Positions 1–20 (MLSTLMKLLSACLWPSSSSG) are cleaved as a signal peptide. The PPM-type phosphatase domain occupies 42 to 353 (LVGEFSMAVV…DDITVVIIFL (312 aa)). Residue Ser-73 is modified to Phosphoserine. 4 residues coordinate Mn(2+): Asp-84, Gly-85, Asp-285, and Asp-344.

The protein belongs to the PP2C family. As to quaternary structure, interacts with SAUR19. Mg(2+) serves as cofactor. It depends on Mn(2+) as a cofactor.

The enzyme catalyses O-phospho-L-seryl-[protein] + H2O = L-seryl-[protein] + phosphate. It carries out the reaction O-phospho-L-threonyl-[protein] + H2O = L-threonyl-[protein] + phosphate. Its function is as follows. May dephosphorylate and repress plasma membrane H(+)-ATPases (PM H(+)-ATPases, e.g. AHA1 and AHA2), thus influencing negatively plant growth and fitness. The polypeptide is Probable protein phosphatase 2C 46 (Arabidopsis thaliana (Mouse-ear cress)).